The primary structure comprises 330 residues: Zinc finger protein Gfi-1b (330 aa).

Positions 1-20 (MPRSFLVKSKKAHTYHQPRA) are SNAG domain. Disordered stretches follow at residues 1 to 21 (MPRSFLVKSKKAHTYHQPRAQ) and 75 to 99 (MASAPEGPLVTPQPQDGESPLSESP). An N6,N6-dimethyllysine modification is found at Lys-8. Residues 91 to 330 (GESPLSESPP…RHRESQHNLK (240 aa)) are interaction with ARIH2. 6 consecutive C2H2-type zinc fingers follow at residues 163 to 186 (YHCVKCNKVFSTPHGLEVHVRRSH), 192 to 214 (FACDVCGKTFGHAVSLEQHTHVH), 220 to 242 (FECRMCGKAFKRSSTLSTHLLIH), 248 to 270 (YPCQFCGKRFHQKSDMKKHTYIH), 276 to 298 (HKCQVCGKAFSQSSNLITHSRKH), and 304 to 327 (FSCELCTKGFQRKVDLRRHRESQH). A mediates interaction with GATA1 region spans residues 164–330 (HCVKCNKVFS…RHRESQHNLK (167 aa)).

In terms of assembly, interacts with histone methyltransferases EHMT2 and SUV39H1. Interacts with ARIH2 (via RING-type 2) and with RUNX1T1. Forms a complex with GATA1. Component of a RCOR-GFI-KDM1A-HDAC complex. Interacts directly with RCOR1, KDM1A and HDAC2. In terms of processing, methylation at Lys-8 in the SNAG domain seems required for the recruitment of the corepressor complex. Expressed in bone marrow and in spleen. Detected in hematopoietic stem cells, erythroblasts, and megakaryocytes. Expressed in thymocytes.

Its subcellular location is the nucleus. Essential proto-oncogenic transcriptional regulator necessary for development and differentiation of erythroid and megakaryocytic lineages. Component of a RCOR-GFI-KDM1A-HDAC complex that suppresses, via histone deacetylase (HDAC) recruitment, a number of genes implicated in multilineage blood cell development and controls hematopoietic differentiation. Transcriptional repressor or activator depending on both promoter and cell type context; represses promoter activity of SOCS1 and SOCS3 and thus, may regulate cytokine signaling pathways. Cooperates with GATA1 to repress target gene transcription, such as the apoptosis regulator BCL2L1; GFI1B silencing in leukemic cell lines markedly increase apoptosis rate. Inhibits down-regulation of MYC and MYB as well as the cyclin-dependent kinase inhibitor CDKN1A/P21WAF1 in IL6-treated myelomonocytic cells. Represses expression of GATA3 in T-cell lymphomas and inhibits GATA1-mediated transcription; as GATA1 also mediates erythroid GFI1B transcription, both GATA1 and GFI1B participate in a feedback regulatory pathway controlling the expression of GFI1B gene in erythroid cells. Suppresses GATA1-mediated stimulation of GFI1B promoter through protein interaction. Binds to gamma-satellite DNA and to its own promoter, auto-repressing its own expression. Alters histone methylation by recruiting histone methyltransferase to target genes promoters. Plays a role in heterochromatin formation. The polypeptide is Zinc finger protein Gfi-1b (Gfi1b) (Mus musculus (Mouse)).